The chain runs to 249 residues: Probable transcriptional regulatory protein CYA_2259 (249 aa).

The protein belongs to the TACO1 family.

Its subcellular location is the cytoplasm. In Synechococcus sp. (strain JA-3-3Ab) (Cyanobacteria bacterium Yellowstone A-Prime), this protein is Probable transcriptional regulatory protein CYA_2259.